We begin with the raw amino-acid sequence, 570 residues long: Acetolactate synthase (570 aa).

Glu-60 is a thiamine diphosphate binding site. FAD is bound by residues Gln-162, 266–287 (FRNQPGDLLLEQADVVLTIGYD), and 308–327 (DEIIADIDHAYQPDLELIGD). The tract at residues 399 to 479 (SHAIWMSRYF…IVHIVWNDST (81 aa)) is thiamine pyrophosphate binding. Residue Asp-450 coordinates Mg(2+).

This sequence belongs to the TPP enzyme family. Requires Mg(2+) as cofactor. Thiamine diphosphate is required as a cofactor.

The enzyme catalyses 2 pyruvate + H(+) = (2S)-2-acetolactate + CO2. Its pathway is polyol metabolism; (R,R)-butane-2,3-diol biosynthesis; (R,R)-butane-2,3-diol from pyruvate: step 1/3. In Bacillus subtilis (strain 168), this protein is Acetolactate synthase (alsS).